The following is an 84-amino-acid chain: Large ribosomal subunit protein bL27 (84 aa).

It belongs to the bacterial ribosomal protein bL27 family.

The sequence is that of Large ribosomal subunit protein bL27 from Salinispora tropica (strain ATCC BAA-916 / DSM 44818 / JCM 13857 / NBRC 105044 / CNB-440).